The sequence spans 244 residues: Probable transcriptional regulatory protein CHY_1525 (244 aa).

Belongs to the TACO1 family.

It localises to the cytoplasm. In Carboxydothermus hydrogenoformans (strain ATCC BAA-161 / DSM 6008 / Z-2901), this protein is Probable transcriptional regulatory protein CHY_1525.